The following is a 262-amino-acid chain: uncharacterized protein (262 aa).

Transmembrane regions (helical) follow at residues Leu-7 to Met-27, Asp-58 to Gly-78, Phe-114 to Gly-134, Gly-140 to Gly-160, Gly-179 to Phe-199, and Ile-216 to Gly-236.

It localises to the cell membrane. This is an uncharacterized protein from Methanocaldococcus jannaschii (strain ATCC 43067 / DSM 2661 / JAL-1 / JCM 10045 / NBRC 100440) (Methanococcus jannaschii).